A 1046-amino-acid polypeptide reads, in one-letter code: FERM, ARHGEF and pleckstrin domain-containing protein 1 (1046 aa).

The FERM domain maps to 40–320; the sequence is ISIKIQMLDD…EHHAFFRLFE (281 aa). The interval 374–522 is disordered; sequence LTAQPSEQHA…LISPLLNDPS (149 aa). Basic and acidic residues predominate over residues 413 to 424; that stretch reads KELKASTEDTGQ. Residues 458–513 are compositionally biased toward polar residues; sequence RMQQNRPQSQQPSTAGSLTGSPHLSELSINSQGGPSVANMSLSPNLSPDAKQSSPL. The DH domain maps to 541-732; that stretch reads KAYFIAKEVA…TEMMAQLHGN (192 aa). Residues 761 to 858 form the PH 1 domain; it reads EFIRLGSLSK…WIEDIQMAID (98 aa). A disordered region spans residues 864 to 907; that stretch reads SDPVPELLASSPPDNKSPDETTVDQESEDDLSASRTSLERQSPH. A compositionally biased stretch (acidic residues) spans 884 to 894; it reads TTVDQESEDDL. A PH 2 domain is found at 933–1030; the sequence is ENQLSGNLLR…WMEVIRSATS (98 aa).

As to quaternary structure, interacts with PLXNA4. In terms of tissue distribution, detected in lateral motor column motor neurons and in preganglionic autonomic motor neurons of the column of Terni in the embryonic spinal cord (at protein level).

It is found in the cell membrane. Its subcellular location is the synapse. The protein localises to the synaptosome. It localises to the cytoplasm. The protein resides in the cytosol. It is found in the cell projection. Its subcellular location is the filopodium. The protein localises to the dendrite. It localises to the dendritic spine. In terms of biological role, functions as a guanine nucleotide exchange factor for RAC1. Plays a role in semaphorin signaling via its interaction with PLXNA4. Plays a role in the assembly and disassembly of dendritic filopodia, the formation of dendritic spines, regulation of dendrite length and ultimately the formation of synapses. The protein is FERM, ARHGEF and pleckstrin domain-containing protein 1 (FARP1) of Gallus gallus (Chicken).